The chain runs to 248 residues: Ureidoacrylate amidohydrolase RutB (248 aa).

Residue D41 is the Proton acceptor of the active site. Residue K150 is part of the active site. Residue C183 is the Nucleophile of the active site.

This sequence belongs to the isochorismatase family. RutB subfamily.

It catalyses the reaction (Z)-3-ureidoacrylate + H2O + H(+) = (Z)-3-aminoacrylate + NH4(+) + CO2. It carries out the reaction (Z)-3-ureidoacrylate + H2O = (Z)-3-aminoacrylate + carbamate + H(+). The catalysed reaction is (Z)-2-methylureidoacrylate + H2O + H(+) = (Z)-2-methylaminoacrylate + NH4(+) + CO2. Its function is as follows. Hydrolyzes ureidoacrylate to form aminoacrylate and carbamate. The carbamate hydrolyzes spontaneously, thereby releasing one of the nitrogen atoms of the pyrimidine ring as ammonia and one of its carbon atoms as CO2. In Stutzerimonas stutzeri (strain A1501) (Pseudomonas stutzeri), this protein is Ureidoacrylate amidohydrolase RutB.